Reading from the N-terminus, the 1342-residue chain is DNA-directed RNA polymerase subunit beta (1342 aa).

An N6-acetyllysine mark is found at Lys-1022 and Lys-1200.

The protein belongs to the RNA polymerase beta chain family. As to quaternary structure, the RNAP catalytic core consists of 2 alpha, 1 beta, 1 beta' and 1 omega subunit. When a sigma factor is associated with the core the holoenzyme is formed, which can initiate transcription.

The enzyme catalyses RNA(n) + a ribonucleoside 5'-triphosphate = RNA(n+1) + diphosphate. In terms of biological role, DNA-dependent RNA polymerase catalyzes the transcription of DNA into RNA using the four ribonucleoside triphosphates as substrates. This Escherichia coli O81 (strain ED1a) protein is DNA-directed RNA polymerase subunit beta.